A 102-amino-acid chain; its full sequence is Small ribosomal subunit protein uS10 (102 aa).

It belongs to the universal ribosomal protein uS10 family. In terms of assembly, part of the 30S ribosomal subunit.

In terms of biological role, involved in the binding of tRNA to the ribosomes. This is Small ribosomal subunit protein uS10 from Staphylococcus aureus (strain Mu3 / ATCC 700698).